We begin with the raw amino-acid sequence, 2376 residues long: Serine/threonine-protein kinase WNK1 (2376 aa).

Disordered regions lie at residues 1 to 78 and 93 to 201; these read MSGG…EHRF and ELPG…QQDD. Composition is skewed to low complexity over residues 10-19 and 40-49; these read SSPPGSLFLS and GAAAADAGAG. Residues serine 15 and serine 19 each carry the phosphoserine modification. Residues 50–66 are compositionally biased toward basic and acidic residues; it reads RTEEYRRRRHTMDKDSR. Threonine 60 bears the Phosphothreonine mark. Over residues 125–158 the composition is skewed to low complexity; it reads TPAVAHVAQQPPAAATPGEPAAAVPAAASAPGSA. Residue serine 172 is modified to Phosphoserine. The 259-residue stretch at 219-477 folds into the Protein kinase domain; sequence LKFDIEIGRG…IKDLLNHAFF (259 aa). Residue serine 229 coordinates ATP. Chloride is bound by residues phenylalanine 281 and leucine 297. ATP-binding positions include 299-302 and lysine 349; that span reads TELM. The active-site Proton acceptor is aspartate 366. Positions 367 and 369 each coordinate chloride. A phosphoserine; by autocatalysis mark is found at serine 376 and serine 380. The interval 486–553 is autoinhibitory domain; that stretch reads ELAEEDDGEK…VCEGDHKTMA (68 aa). Basic and acidic residues predominate over residues 571–586; the sequence is QLVREEQEKRKQEESS. 3 disordered regions span residues 571–641, 701–799, and 1026–1118; these read QLVR…QLQY, AQPH…PVPT, and TTSS…SRPK. Low complexity-rich tracts occupy residues 587–601 and 614–624; these read LKQQ…SQAG and AAATTSASVST. Positions 627–637 are interaction with KLHL3; the sequence is EPEEPEADQHQ. The segment covering 708–752 has biased composition (low complexity); it reads PPSSMAQGQSQGQPSSSSLTGIPSSQPVQHSQQQQGVQQTAPSQQ. Positions 753–766 are enriched in polar residues; the sequence is TVQYSLPQTSAPSE. Over residues 1045–1057 the composition is skewed to pro residues; it reads PPEPVPAAPPQPT. Over residues 1079–1089 the composition is skewed to polar residues; it reads SDGNENVPSSS. Residues 1097-1118 show a composition bias toward basic residues; the sequence is IKRHYRKSVRSRSRHEKTSRPK. The RFXV motif 1 motif lies at 1257 to 1260; it reads RFIV. Serine 1261 bears the Phosphoserine mark. Disordered stretches follow at residues 1459-1478 and 1734-1770; these read STAA…VSGS and STIP…PPSE. Pro residues predominate over residues 1746 to 1756; that stretch reads SKPPSTKPPVL. The RFXV motif 2 motif lies at 1853 to 1856; sequence RFQV. The span at 1862 to 1878 shows a compositional bias: basic and acidic residues; sequence DTQKEGKNKSEDVKSVH. The segment at 1862–1942 is disordered; the sequence is DTQKEGKNKS…QPTKVGRFQV (81 aa). The span at 1881 to 1899 shows a compositional bias: low complexity; it reads SSTSESSVLSSSSPESTLV. 2 short sequence motifs (RFXV motif) span residues 1939-1942 and 1951-1954; these read RFQV and RFSV. Serine 1972, serine 1996, serine 2005, serine 2006, serine 2021, serine 2023, and serine 2026 each carry phosphoserine. Disordered stretches follow at residues 1991-2033 and 2110-2239; these read EKPE…LCSK and AAAP…RKGT. Basic residues predominate over residues 2116–2128; it reads GRRRRPTKSKGSK. Residues 2129-2141 show a composition bias toward low complexity; the sequence is SSRSSSLGNKSPG. Composition is skewed to polar residues over residues 2146-2161 and 2169-2193; these read LSGQ…QQTL and ETGQ…SAFT. The segment covering 2207 to 2223 has biased composition (low complexity); that stretch reads GQGTSSTNTVGGTVSSQ. Residues 2224–2238 are compositionally biased toward polar residues; that stretch reads AAQAQPPTMTSSRKG. Residues 2235 to 2255 are amphipathic alpha-helix; sequence SRKGTFTDDLHKLVDNWARDA. Phosphoserine occurs at positions 2264, 2280, 2364, and 2366.

The protein belongs to the protein kinase superfamily. Ser/Thr protein kinase family. WNK subfamily. In terms of assembly, interacts with WNK3. Interacts with WNK4; inhibiting the activity of WNK4. Interacts with SGK1; promoting its activation. Associates with the mTORC2 complex. Interacts with UVRAG. Interacts (via amphipathic alpha-helix region) with EMC2; promoting the ER membrane protein complex assembly. It depends on Mg(2+) as a cofactor. Autophosphorylated at Ser-376 and Ser-380, promoting its activity. Autophosphorylation at Ser-380 is inhibited by intracellular calcium. Phosphorylation at Thr-60 increases ability to activate SGK1. In terms of processing, ubiquitinated by the BCR(KLHL3) complex, leading to its degradation. Also ubiquitinated by the BCR(KLHL2) complex.

Its subcellular location is the cytoplasm. It localises to the nucleus. The protein resides in the cytoskeleton. It is found in the spindle. It catalyses the reaction L-seryl-[protein] + ATP = O-phospho-L-seryl-[protein] + ADP + H(+). The enzyme catalyses L-threonyl-[protein] + ATP = O-phospho-L-threonyl-[protein] + ADP + H(+). Activated in response to hyperosmotic stress: cell shrinkage promotes formation of a membraneless compartment that concentrates WNK1 with its substrates, OXSR1/OSR1 and STK39/SPAK. Activation requires autophosphorylation of Ser-380 and, to a lower extent, Ser-376. Autophosphorylation and subsequent activation is inhibited by increases in intracellular ionic strength: Cl(-) potently inhibits WNK1 kinase activity via direct binding. Also inhibited by K(+) ions. Functionally, serine/threonine-protein kinase component of the WNK1-SPAK/OSR1 kinase cascade, which acts as a key regulator of blood pressure and regulatory volume increase by promoting ion influx. WNK1 mediates regulatory volume increase in response to hyperosmotic stress by acting as a molecular crowding sensor, which senses cell shrinkage and mediates formation of a membraneless compartment by undergoing liquid-liquid phase separation. The membraneless compartment concentrates WNK1 with its substrates, OXSR1/OSR1 and STK39/SPAK, promoting WNK1-dependent phosphorylation and activation of downstream kinases OXSR1/OSR1 and STK39/SPAK. Following activation, OXSR1/OSR1 and STK39/SPAK catalyze phosphorylation of ion cotransporters SLC12A1/NKCC2, SLC12A2/NKCC1, SLC12A5/KCC2 and SLC12A6/KCC3, regulating their activity. Phosphorylation of Na-K-Cl cotransporters SLC12A2/NKCC1 and SLC12A2/NKCC1 promote their activation and ion influx; simultaneously, phosphorylation of K-Cl cotransporters SLC12A5/KCC2 and SLC12A6/KCC3 inhibit their activity, blocking ion efflux. Also acts as a regulator of angiogenesis in endothelial cells via activation of OXSR1/OSR1 and STK39/SPAK: activation of OXSR1/OSR1 regulates chemotaxis and invasion, while STK39/SPAK regulates endothelial cell proliferation. Also acts independently of the WNK1-SPAK/OSR1 kinase cascade by catalyzing phosphorylation of other substrates, such as SYT2, PCF11 and NEDD4L. Mediates phosphorylation of SYT2, regulating SYT2 association with phospholipids and membrane-binding. Regulates mRNA export in the nucleus by mediating phosphorylation of PCF11, thereby decreasing the association between PCF11 and POLR2A/RNA polymerase II and promoting mRNA export to the cytoplasm. Acts as a negative regulator of autophagy. Required for the abscission step during mitosis, independently of the WNK1-SPAK/OSR1 kinase cascade. May also play a role in actin cytoskeletal reorganization. Also acts as a scaffold protein independently of its protein kinase activity: negatively regulates cell membrane localization of various transporters and channels, such as SLC4A4, SLC26A6, SLC26A9, TRPV4 and CFTR. Involved in the regulation of epithelial Na(+) channel (ENaC) by promoting activation of SGK1 in a kinase-independent manner: probably acts as a scaffold protein that promotes the recruitment of SGK1 to the mTORC2 complex in response to chloride, leading to mTORC2-dependent phosphorylation and activation of SGK1. Acts as an assembly factor for the ER membrane protein complex independently of its protein kinase activity: associates with EMC2 in the cytoplasm via its amphipathic alpha-helix, and prevents EMC2 ubiquitination and subsequent degradation, thereby promoting EMC2 stabilization. The polypeptide is Serine/threonine-protein kinase WNK1 (Sus scrofa (Pig)).